The sequence spans 230 residues: Protein CbbY (230 aa).

Asp8 functions as the Nucleophile in the catalytic mechanism. Positions 8 and 10 each coordinate Mg(2+). Residue Asp8 participates in substrate binding. Asp10 functions as the Proton donor in the catalytic mechanism. Substrate-binding positions include Glu17, 50–54, 75–78, and 115–121; these read GGKER, HRAK, and TTTSLPN. Asp176 contributes to the Mg(2+) binding site.

The protein belongs to the HAD-like hydrolase superfamily. CbbY/CbbZ/Gph/YieH family. It depends on Mg(2+) as a cofactor.

It catalyses the reaction D-xylulose 1,5-bisphosphate + H2O = D-xylulose 5-phosphate + phosphate. Highly selective xylulose-1,5-bisphosphate (XuBP) phosphatase. Also shows activity towards ribulose-1,5-bisphosphate (RuBP) and fructose-1,6-bisphosphate (FBP), but not towards fructose-6-phosphate (F6P) or ribulose-5-phosphate (Ru5P). Degrades xylulose-1,5-bisphosphate, a potent inhibitor of rubisco produced by the rubisco itself. The protein is Protein CbbY of Cereibacter sphaeroides (Rhodobacter sphaeroides).